Here is an 83-residue protein sequence, read N- to C-terminus: MPEEEQLTFEAALQKLEEVVQALEGEGLTLEDSLAYYQEGIRLVRLCRQRLKEVEGKLQVILLQDGEVVTRELSLPGGENHGT.

Belongs to the XseB family. In terms of assembly, heterooligomer composed of large and small subunits.

It localises to the cytoplasm. It carries out the reaction Exonucleolytic cleavage in either 5'- to 3'- or 3'- to 5'-direction to yield nucleoside 5'-phosphates.. In terms of biological role, bidirectionally degrades single-stranded DNA into large acid-insoluble oligonucleotides, which are then degraded further into small acid-soluble oligonucleotides. This is Exodeoxyribonuclease 7 small subunit from Moorella thermoacetica (strain ATCC 39073 / JCM 9320).